The sequence spans 309 residues: Polyprenal reductase (309 aa).

At 1 to 3 the chain is on the cytoplasmic side; it reads MFH. A helical transmembrane segment spans residues 4-24; it reads ILSIVNIIWLLLALCFGAAFC. At 25 to 67 the chain is on the lumenal side; it reads LNKFSVKLPNRVEHVFQDFIRYGKTKENIKRASWQLVFDLSKR. Residues 68–88 form a helical membrane-spanning segment; sequence YFYHFYVVSVMWNGLLLLFSI. Topologically, residues 89–114 are cytoplasmic; it reads RSVVMSEAFPDWIIDVLGSLTGRSRG. A helical transmembrane segment spans residues 115–135; the sequence is AWNEIHLSTLLLQVLLWVHTL. The Lumenal segment spans residues 136 to 150; it reads RRLLECLFVSVFSDG. The chain crosses the membrane as a helical span at residues 151-171; that stretch reads VINVVQYAFGLSYYIILGLTV. Over 172-185 the chain is Cytoplasmic; the sequence is LCTNDSLPQSESVS. A helical transmembrane segment spans residues 186 to 206; the sequence is FFNQLTWYHVVGTLLFFWASF. The Lumenal segment spans residues 207–255; the sequence is LQHQSLSLLAKMRTDSSGKVETLAHKMPCGGWFELVSCPHYLAELLIYA. A helical membrane pass occupies residues 256 to 276; it reads AMCVCCGCASLTWWMVVLYVL. The Cytoplasmic segment spans residues 277-309; it reads CNQALAAQLCHEYYRSKFKTYPHHRKAFIPFVL.

The protein belongs to the steroid 5-alpha reductase family. Polyprenal reductase subfamily.

The protein resides in the endoplasmic reticulum membrane. The catalysed reaction is a di-trans,poly-cis-dolichal + NADP(+) = a di-trans,poly-cis-polyprenal + NADPH + H(+). It catalyses the reaction a 3-oxo-5alpha-steroid + NADP(+) = a 3-oxo-Delta(4)-steroid + NADPH + H(+). The enzyme catalyses androst-4-ene-3,17-dione + NADPH + H(+) = 5alpha-androstan-3,17-dione + NADP(+). It carries out the reaction 17beta-hydroxy-5alpha-androstan-3-one + NADP(+) = testosterone + NADPH + H(+). Its pathway is protein modification; protein glycosylation. Plays a key role in early steps of protein N-linked glycosylation by being involved in the conversion of polyprenol into dolichol. Acts as a polyprenal reductase that mediates the reduction of polyprenal into dolichal in a NADP-dependent mechanism. Dolichols are required for the synthesis of dolichol-linked monosaccharides and the oligosaccharide precursor used for N-glycosylation. Also able to convert testosterone (T) into 5-alpha-dihydrotestosterone (DHT). The chain is Polyprenal reductase (srd5a3) from Danio rerio (Zebrafish).